A 336-amino-acid polypeptide reads, in one-letter code: 2-phospho-L-lactate transferase (336 aa).

Aspartate 49 contributes to the 7,8-didemethyl-8-hydroxy-5-deazariboflavin binding site.

This sequence belongs to the CofD family. As to quaternary structure, homodimer. Requires Mg(2+) as cofactor.

The catalysed reaction is (2S)-lactyl-2-diphospho-5'-guanosine + 7,8-didemethyl-8-hydroxy-5-deazariboflavin = oxidized coenzyme F420-0 + GMP + H(+). Its pathway is cofactor biosynthesis; coenzyme F420 biosynthesis. Its function is as follows. Catalyzes the transfer of the 2-phospholactate moiety from (2S)-lactyl-2-diphospho-5'-guanosine to 7,8-didemethyl-8-hydroxy-5-deazariboflavin (FO) with the formation of oxidized coenzyme F420-0 and GMP. The polypeptide is 2-phospho-L-lactate transferase (Halobacterium salinarum (strain ATCC 700922 / JCM 11081 / NRC-1) (Halobacterium halobium)).